We begin with the raw amino-acid sequence, 262 residues long: tRNA pseudouridine synthase A (262 aa).

Aspartate 51 serves as the catalytic Nucleophile. Tyrosine 109 contributes to the substrate binding site.

The protein belongs to the tRNA pseudouridine synthase TruA family. In terms of assembly, homodimer.

It carries out the reaction uridine(38/39/40) in tRNA = pseudouridine(38/39/40) in tRNA. Functionally, formation of pseudouridine at positions 38, 39 and 40 in the anticodon stem and loop of transfer RNAs. This Legionella pneumophila (strain Paris) protein is tRNA pseudouridine synthase A.